An 81-amino-acid chain; its full sequence is ATP synthase subunit c (81 aa).

Transmembrane regions (helical) follow at residues 7–27 and 55–75; these read LVAI…AIGF and IAGL…FFIF.

The protein belongs to the ATPase C chain family. In terms of assembly, F-type ATPases have 2 components, F(1) - the catalytic core - and F(0) - the membrane proton channel. F(1) has five subunits: alpha(3), beta(3), gamma(1), delta(1), epsilon(1). F(0) has three main subunits: a(1), b(2) and c(10-14). The alpha and beta chains form an alternating ring which encloses part of the gamma chain. F(1) is attached to F(0) by a central stalk formed by the gamma and epsilon chains, while a peripheral stalk is formed by the delta and b chains.

It is found in the cell inner membrane. In terms of biological role, f(1)F(0) ATP synthase produces ATP from ADP in the presence of a proton or sodium gradient. F-type ATPases consist of two structural domains, F(1) containing the extramembraneous catalytic core and F(0) containing the membrane proton channel, linked together by a central stalk and a peripheral stalk. During catalysis, ATP synthesis in the catalytic domain of F(1) is coupled via a rotary mechanism of the central stalk subunits to proton translocation. Functionally, key component of the F(0) channel; it plays a direct role in translocation across the membrane. A homomeric c-ring of between 10-14 subunits forms the central stalk rotor element with the F(1) delta and epsilon subunits. The polypeptide is ATP synthase subunit c (Acinetobacter baumannii (strain ACICU)).